We begin with the raw amino-acid sequence, 422 residues long: Ribonuclease Y (422 aa).

A KH domain is found at Thr-112–Leu-172. The HD domain occupies Val-238 to Ser-331.

The protein belongs to the RNase Y family.

In terms of biological role, endoribonuclease that initiates mRNA decay. The chain is Ribonuclease Y from Mycoplasma mycoides.